Here is a 336-residue protein sequence, read N- to C-terminus: Anthranilate phosphoribosyltransferase (336 aa).

Residues glycine 79, 82–83 (GD), threonine 87, 89–92 (NIST), 107–115 (KHGNRAMSS), and serine 119 contribute to the 5-phospho-alpha-D-ribose 1-diphosphate site. Glycine 79 serves as a coordination point for anthranilate. Serine 91 is a Mg(2+) binding site. Asparagine 110 contributes to the anthranilate binding site. Arginine 165 lines the anthranilate pocket. Mg(2+)-binding residues include aspartate 225 and glutamate 226.

It belongs to the anthranilate phosphoribosyltransferase family. As to quaternary structure, homodimer. Mg(2+) serves as cofactor.

The catalysed reaction is N-(5-phospho-beta-D-ribosyl)anthranilate + diphosphate = 5-phospho-alpha-D-ribose 1-diphosphate + anthranilate. It participates in amino-acid biosynthesis; L-tryptophan biosynthesis; L-tryptophan from chorismate: step 2/5. In terms of biological role, catalyzes the transfer of the phosphoribosyl group of 5-phosphorylribose-1-pyrophosphate (PRPP) to anthranilate to yield N-(5'-phosphoribosyl)-anthranilate (PRA). In Dictyoglomus turgidum (strain DSM 6724 / Z-1310), this protein is Anthranilate phosphoribosyltransferase.